Here is a 647-residue protein sequence, read N- to C-terminus: Protein FAM161A (647 aa).

Disordered stretches follow at residues 32–55 and 143–175; these read RELGDRPHPSASVSPRGPARTSME and PAQHDHLKQSRSVSPSLAESSHESTDEDYGDSE. The span at 152–161 shows a compositional bias: polar residues; sequence SRSVSPSLAE. 2 coiled-coil regions span residues 243–268 and 518–544; these read IKSKSEIELENNLLKEKLEEEAECQK and AIRKREKQRTKDYMKELEAMEQRVLNK. 2 disordered regions span residues 504-524 and 588-647; these read QTPRSTESSKRREYAIRKREK and DEHV…IEEI. 2 stretches are compositionally biased toward basic and acidic residues: residues 510 to 524 and 588 to 600; these read ESSKRREYAIRKREK and DEHVGVREEKKIP. The span at 613-638 shows a compositional bias: acidic residues; it reads DLLDDEEDDKYDCESEEAEEEDAYST.

Belongs to the FAM161 family.

The protein resides in the cytoplasm. Its subcellular location is the cytoskeleton. It localises to the cilium basal body. The protein localises to the cell projection. It is found in the cilium. The protein resides in the microtubule organizing center. Its subcellular location is the centrosome. It localises to the centriole. Functionally, involved in ciliogenesis. This chain is Protein FAM161A (fam161a), found in Xenopus laevis (African clawed frog).